Here is a 230-residue protein sequence, read N- to C-terminus: Type II restriction enzyme NlaIII (230 aa).

It catalyses the reaction Endonucleolytic cleavage of DNA to give specific double-stranded fragments with terminal 5'-phosphates.. In terms of biological role, a P subtype restriction enzyme that recognizes the double-stranded sequence 5'-CATG-3' and cleaves after G-4. The sequence is that of Type II restriction enzyme NlaIII (nlaIIIR) from Neisseria lactamica.